A 258-amino-acid chain; its full sequence is Enterotoxin type D (258 aa).

Residues 1–25 (MKKFNILIALLFFTSLVISPLNVKA) form the signal peptide. 4 residues coordinate Zn(2+): aspartate 212, histidine 248, histidine 250, and aspartate 252.

This sequence belongs to the staphylococcal/streptococcal toxin family. Homodimer; zinc-dependent. Interacts with MHC class II molecules composed of alpha/HLA-DRA and beta/HLA-DRB1 chains. Zn(2+) is required as a cofactor.

The protein resides in the secreted. In terms of biological role, staphylococcal enterotoxin that activates the host immune system by binding as unprocessed molecules to major histocompatibility (MHC) complex class II and T-cell receptor (TCR) molecules. In turn, this ternary complex activates a large number of T-lymphocytes initiating a systemic release of pro-inflammatory cytokines. In addition, induces B-cell proliferation and differentiation in the presence of T-cells. Causes also the intoxication staphylococcal food poisoning syndrome. The protein is Enterotoxin type D (entD) of Staphylococcus aureus.